A 63-amino-acid polypeptide reads, in one-letter code: Putative F-box protein At1g47702 (63 aa).

The F-box domain occupies 23–63 (KDRISDLPNRILGKIIVKLPLDEAVRIMALSKRWKSIWDDN).

This chain is Putative F-box protein At1g47702, found in Arabidopsis thaliana (Mouse-ear cress).